The chain runs to 333 residues: Mitochondrial glycine transporter (333 aa).

Solcar repeat units lie at residues 10–93 (SKST…IRQS), 125–209 (LSNT…GKKR), and 235–319 (HAAS…LIRR). A run of 2 helical transmembrane segments spans residues 16–41 (FAAG…TRVQ) and 68–94 (GAVP…RQSA). The segment at 98–126 (SPLPSSSSSTTTSSSTTTSSSSSSLPKLS) is disordered. 4 helical membrane-spanning segments follow: residues 131–156 (LLAG…VRYE), 184–207 (GYGA…EQGK), 239–265 (INFA…KTRI), and 294–312 (GLAL…AWTV).

It belongs to the mitochondrial carrier (TC 2.A.29) family. SLC25A38 subfamily.

Its subcellular location is the mitochondrion inner membrane. The catalysed reaction is glycine(in) = glycine(out). Its function is as follows. Mitochondrial glycine transporter that imports glycine into the mitochondrial matrix. Plays an important role in providing glycine for the first enzymatic step in heme biosynthesis, the condensation of glycine with succinyl-CoA to produce 5-aminolevulinate (ALA) in the mitochondrial matrix. The sequence is that of Mitochondrial glycine transporter from Chaetomium globosum (strain ATCC 6205 / CBS 148.51 / DSM 1962 / NBRC 6347 / NRRL 1970) (Soil fungus).